We begin with the raw amino-acid sequence, 488 residues long: Integrin beta-like protein 1 (488 aa).

Positions 1–21 are cleaved as a signal peptide; that stretch reads MHAGAFINFVWALSLVSLLAA. Cystine bridges form between cysteine 38-cysteine 65, cysteine 49-cysteine 63, cysteine 57-cysteine 68, cysteine 70-cysteine 83, cysteine 85-cysteine 106, cysteine 90-cysteine 104, cysteine 98-cysteine 109, cysteine 111-cysteine 120, cysteine 126-cysteine 153, cysteine 137-cysteine 151, cysteine 145-cysteine 156, cysteine 158-cysteine 172, cysteine 174-cysteine 196, cysteine 179-cysteine 194, cysteine 188-cysteine 199, cysteine 201-cysteine 210, cysteine 214-cysteine 241, cysteine 225-cysteine 239, cysteine 233-cysteine 244, cysteine 246-cysteine 263, cysteine 265-cysteine 290, cysteine 270-cysteine 288, cysteine 282-cysteine 293, cysteine 295-cysteine 304, cysteine 310-cysteine 337, cysteine 321-cysteine 335, cysteine 329-cysteine 340, cysteine 342-cysteine 355, cysteine 357-cysteine 378, cysteine 362-cysteine 376, cysteine 370-cysteine 381, cysteine 383-cysteine 392, cysteine 398-cysteine 425, cysteine 409-cysteine 423, cysteine 417-cysteine 428, cysteine 430-cysteine 442, cysteine 444-cysteine 465, cysteine 449-cysteine 463, cysteine 457-cysteine 468, and cysteine 470-cysteine 479. 10 I-EGF domains span residues 38-84, 85-121, 126-173, 174-211, 214-264, 265-305, 310-356, 357-393, 398-443, and 444-480; these read CRLP…PLCE, CHDW…EACQ, CDLT…KYCE, CDDT…DKCE, CDIT…DTCE, CDER…RKCE, CALS…KNCE, CDDR…KLCQ, CNMT…EFCE, and CDDR…NACE. An I repeat occupies 49-89; the sequence is CRTPDGSICSGRGSCDCGICLCEVKEAGKYYGPLCECHDWV. The interval 49–488 is cysteine-rich tandem repeats; sequence CRTPDGSICS…CEIWLGSEYP (440 aa). An II repeat occupies 90-136; that stretch reads CHTYDGQVCAGHGQCDCGVCKCDVGWSGEACQYPTTCDLTRKKSNEM. An III repeat occupies 137–178; sequence CKNSQAVICSNAGTCQCGRCKCENSDNSGLIYGKYCECDDTE. The stretch at 179–224 is one IV repeat; the sequence is CFDDETQEICGGHGKCYCGNCYCEAGWHGDKCEFQCDITPWEIKKR. The V repeat unit spans residues 225-269; sequence CTSPDGKICSNRGTCVCGECTCHDVDPTGDWGDIHGDTCECDERN. The stretch at 270 to 320 is one VI repeat; the sequence is CKSVYDRYSDDFCSGHGQCNCGRCDCKDGWTGRKCEHPRACALSIEESKKK. Residues 321-361 form a VII repeat; it reads CQGSASQPCSGRGKCECGQCTCFPPGDSKVYGKNCECDDRQ. The stretch at 362 to 408 is one VIII repeat; sequence CEDLEGKICGEHGTCSCGRCICEAGWFGKLCQHERKCNMTEEESKSQ. The N-linked (GlcNAc...) asparagine glycan is linked to asparagine 399. The IX repeat unit spans residues 409 to 448; that stretch reads CESDDGILCSGKGSCHCGKCICSPQEWYVSGEFCECDDRD. A X repeat occupies 449 to 488; that stretch reads CDKHDGLICTGNGICNCGNCECWEGWNGNACEIWLGSEYP.

Its subcellular location is the secreted. This Xenopus laevis (African clawed frog) protein is Integrin beta-like protein 1 (itgbl1).